We begin with the raw amino-acid sequence, 126 residues long: Methylglyoxal synthase (126 aa).

Residues 1-126 (MEKKIALIAH…LIKGLESLIF (126 aa)) form the MGS-like domain. Residues H10, K14, 36–39 (TGTT), and 56–57 (SG) each bind substrate. D62 functions as the Proton donor/acceptor in the catalytic mechanism. H89 lines the substrate pocket.

It belongs to the methylglyoxal synthase family.

The catalysed reaction is dihydroxyacetone phosphate = methylglyoxal + phosphate. Catalyzes the formation of methylglyoxal from dihydroxyacetone phosphate. This is Methylglyoxal synthase from Borreliella burgdorferi (strain ATCC 35210 / DSM 4680 / CIP 102532 / B31) (Borrelia burgdorferi).